Here is a 406-residue protein sequence, read N- to C-terminus: Interactor protein for cytohesin exchange factors 1 (406 aa).

The PH domain maps to 13–112; it reads HADCQGWLYK…WLNKLGFAVT (100 aa). Disordered regions lie at residues 118–173, 228–285, and 383–406; these read TKDE…FSSL, CRVS…EDDE, and PQDP…ENSL. The segment covering 123 to 134 has biased composition (acidic residues); that stretch reads CYSESEQEDPET. Over residues 144–160 the composition is skewed to low complexity; it reads ASATSSPVAARRASSSS. Positions 228–239 are enriched in polar residues; that stretch reads CRVSENSSTTPE. Residues 243–259 are compositionally biased toward low complexity; the sequence is LNSLSSDDTSSLNNSQD. Residues 272–285 are compositionally biased toward basic and acidic residues; sequence MTDRDEIKSSEDDE. The tract at residues 285 to 406 is necessary for interaction with PSCD2 and to translocate to the plasma membrane; sequence EMEKLYKSLE…TSSDCVENSL (122 aa). Positions 392 to 406 are enriched in polar residues; sequence EIMNPTSSDCVENSL.

As to quaternary structure, interacts with guanine-nucleotide exchange factors PSCD1, PSCD2, PSCD3 and PSCD4. Expressed in brain, spleen, lung, testis and kidney.

It localises to the cytoplasm. The protein resides in the cell membrane. Its function is as follows. Enhances the promotion of guanine-nucleotide exchange by PSCD2 on ARF6 in a concentration-dependent manner. The sequence is that of Interactor protein for cytohesin exchange factors 1 (Ipcef1) from Rattus norvegicus (Rat).